Reading from the N-terminus, the 124-residue chain is Acidic phospholipase A2 (124 aa).

7 disulfide bridges follow: cysteine 26–cysteine 117, cysteine 28–cysteine 44, cysteine 43–cysteine 97, cysteine 49–cysteine 124, cysteine 50–cysteine 90, cysteine 57–cysteine 83, and cysteine 77–cysteine 88. The Ca(2+) site is built by tyrosine 27, glycine 29, and glycine 31. Residue histidine 47 is part of the active site. Ca(2+) is bound at residue aspartate 48. Glutamate 89 is a catalytic residue.

This sequence belongs to the phospholipase A2 family. Group II subfamily. D49 sub-subfamily. The cofactor is Ca(2+). In terms of tissue distribution, expressed by the venom gland.

The protein resides in the secreted. It carries out the reaction a 1,2-diacyl-sn-glycero-3-phosphocholine + H2O = a 1-acyl-sn-glycero-3-phosphocholine + a fatty acid + H(+). Functionally, snake venom phospholipase A2 (PLA2) that inhibits collagen- and ADP-induced platelet aggregation. PLA2 catalyzes the calcium-dependent hydrolysis of the 2-acyl groups in 3-sn-phosphoglycerides. The protein is Acidic phospholipase A2 of Bothrops jararaca (Jararaca).